Reading from the N-terminus, the 165-residue chain is MPEHLNARVEACYRQAEHFFQRSFPRPTVSFRLRGQKAGVAHLDENLLRFNPQLYRENREHFLEQTVAHEVAHLIAHQLFGPRIRPHGEEWQLIMRGIYGLPPDRCHTYAVKRRATTRYLYRCHCPEHNDFPFSPQRHTLVAKGRRYYCRRCKATLVFTGEVLRE.

In terms of domain architecture, SprT-like spans 10-158 (EACYRQAEHF…CRRCKATLVF (149 aa)). Histidine 69 provides a ligand contact to Zn(2+). Glutamate 70 is an active-site residue. Histidine 73 contacts Zn(2+).

This sequence belongs to the SprT family. Requires Zn(2+) as cofactor.

It is found in the cytoplasm. The protein is Protein SprT of Pseudomonas aeruginosa (strain LESB58).